A 458-amino-acid chain; its full sequence is MAVSASVAAGDEDWVLPSEVEVLESIYLDELQVVKGNGRSSPWEIYITLHPATAEDQDSQYVCFTLVLQVPTQYPHEVPQISIRNPRGLSDEQIHKISQALSHVAEAGLGTAMLYELIEKGKEILTDNNIPHGQCVICLYGFQEKEAFTKTPCYHYFRCHCLARYIQHMEHELQAQGREREQERQHAAPEQAVGVQCPVCREPLVYDLASLKAAPEPQQPMELYQPDAESLRQQEERKRLYQRQQERGGIIDLEAERNRYFISLQQPPAPLEPESAIDVSRGSHQPSTLATKPSTTSATHTALSVSLPLASQYTCEKTPGAGPHLPKLGETQKAVLDPRRASRGPWRQPERRHLKGGECNTLKGTSDTQKLQSPEGPLKESMDLKPESHNQGGKGPPQDKGPGEWQGPPPRRTRDCAHWERAKNRTPASSYPRLPRGRGAYRPGPRREPVSLESEDGS.

The region spanning 18–128 (SEVEVLESIY…EKGKEILTDN (111 aa)) is the RWD domain. Zn(2+) is bound by residues Cys135, Cys138, Cys153, His155, Cys161, Cys197, and Cys200. The RING-type zinc finger occupies 135 to 201 (CVICLYGFQE…AVGVQCPVCR (67 aa)). Disordered regions lie at residues 267–299 (PPAP…TSAT) and 317–458 (KTPG…EDGS). Polar residues-rich tracts occupy residues 282-299 (GSHQ…TSAT) and 362-372 (LKGTSDTQKLQ). Basic and acidic residues-rich tracts occupy residues 377–388 (PLKESMDLKPES) and 412–423 (RTRDCAHWERAK). Residues 432-443 (PRLPRGRGAYRP) are compositionally biased toward low complexity.

This sequence belongs to the RNF25 family. Interacts with UBE2D2, and may also interact with UBE2E1 and UBE2E3. Interacts with RELA/p65. Post-translationally, ubiquitinated; autoubiquitinated.

It localises to the cytoplasm. The catalysed reaction is S-ubiquitinyl-[E2 ubiquitin-conjugating enzyme]-L-cysteine + [acceptor protein]-L-lysine = [E2 ubiquitin-conjugating enzyme]-L-cysteine + N(6)-ubiquitinyl-[acceptor protein]-L-lysine.. Its pathway is protein modification; protein ubiquitination. Its function is as follows. E3 ubiquitin-protein ligase that plays a key role in the RNF14-RNF25 translation quality control pathway, a pathway that takes place when a ribosome has stalled during translation, and which promotes ubiquitination and degradation of translation factors on stalled ribosomes. Catalyzes ubiquitination of RPS27A in response to ribosome collisions, promoting activation of RNF14. RNF25 catalyzes ubiquitination of other ribosomal proteins on stalled ribosomes, such as RPL0, RPL1, RPL12, RPS13 and RPS17. Also involved in ubiquitination and degradation of stalled ETF1/eRF1. Independently of its function in the response to stalled ribosomes, mediates ubiquitination and subsequent proteasomal degradation of NKD2. May also stimulate transcription mediated by NF-kappa-B via its interaction with RELA/p65. The polypeptide is E3 ubiquitin-protein ligase RNF25 (RNF25) (Bos taurus (Bovine)).